Reading from the N-terminus, the 859-residue chain is Suppressor protein MPT5 (859 aa).

Positions 85–108 (MNNTSTSNSANSFSPNPNAASNST) are disordered. Residues 86–108 (NNTSTSNSANSFSPNPNAASNST) are compositionally biased toward low complexity. Residues 188–596 (DNSSFGLSSS…KIKLKVKAYA (409 aa)) enclose the PUM-HD domain. Pumilio repeat units lie at residues 209-247 (PLRDLDYIKLATDQFGCRFLQKKLETPSESNMVRDLMYE), 248-283 (QIKPFFLDLILDPFGNYLVQKLCDYLTAEQKTLLIQ), 284-320 (TIYPNVFQISINQYGTRSLQKIIDTVDNEVQIDLIIK), 325-362 (EFTSIEQVVTLINDLNGNHVIQKCIFKFSPSKFGFIID), 363-400 (AIVEQNNIITISTHKHGCCVLQKLLSVCTLQQIFKISV), 401-438 (KIVQFLPGLINDQFGNYIIQFLLDIKELDFYLLAELFN), 439-474 (RLSNELCQLSCLKFSSNVVEKFIKKLFRIITGFIVN), and 503-539 (DIFTVNLNVLIRDNFGNYALQTLLDVKNYSPLLAYNK). A disordered region spans residues 620–658 (TINNENKNPHNKNSHNHNHNHNHNHAHNNNNNNNQKSHT). Basic residues predominate over residues 628 to 645 (PHNKNSHNHNHNHNHNHA). S662, S834, and S838 each carry phosphoserine.

It localises to the cytoplasm. In terms of biological role, RNA-binding protein involved in post-transcriptional regulation. Negatively regulates expression of HO by binding to the 3'-UTR of HO mRNA. Predominantly binds to mRNAs encoding chromatin modifiers and spindle pole body components. Recognizes and binds to 5'-TGTAA[CT]A[AT]TA-3' in the 3'-UTR of target mRNAs. Multicopy suppressor of POP2 mutation. Required for high temperature growth. In Saccharomyces cerevisiae (strain ATCC 204508 / S288c) (Baker's yeast), this protein is Suppressor protein MPT5 (MPT5).